Reading from the N-terminus, the 443-residue chain is Serine/threonine-protein phosphatase 2A 55 kDa regulatory subunit B beta isoform (443 aa).

WD repeat units follow at residues 22–61, 87–128, 171–209, and 220–260; these read TEAD…KNQV, EIEE…KRPE, AHTY…QSFN, and ELTE…CVTG. Phosphoserine is present on S275. WD repeat units follow at residues 279 to 317, 334 to 375, and 410 to 442; these read KLSS…RPIE, ENDC…DVTL, and DFSK…QDKV. T298 is subject to Phosphothreonine.

This sequence belongs to the phosphatase 2A regulatory subunit B family. As to quaternary structure, PP2A consists of a common heterodimeric core enzyme, composed of a 36 kDa catalytic subunit (subunit C) and a 65 kDa constant regulatory subunit (PR65 or subunit A), that associates with a variety of regulatory subunits. Proteins that associate with the core dimer include three families of regulatory subunits B (the R2/B/PR55/B55, R3/B''/PR72/PR130/PR59 and R5/B'/B56 families), the 48 kDa variable regulatory subunit, viral proteins, and cell signaling molecules. Interacts with TOMM22. Interacts with IER5 (via N- and C-terminal regions). As to expression, brain.

The protein localises to the cytoplasm. It is found in the cytoskeleton. Its subcellular location is the membrane. Functionally, the B regulatory subunit might modulate substrate selectivity and catalytic activity, and might also direct the localization of the catalytic enzyme to a particular subcellular compartment. The protein is Serine/threonine-protein phosphatase 2A 55 kDa regulatory subunit B beta isoform (PPP2R2B) of Sus scrofa (Pig).